We begin with the raw amino-acid sequence, 310 residues long: Pseudouridine-5'-phosphate glycosidase (310 aa).

Glu26 acts as the Proton donor in catalysis. The substrate site is built by Lys87 and Val107. Residue Asp139 participates in Mn(2+) binding. Residue 141-143 coordinates substrate; it reads SAD. Lys160 functions as the Nucleophile in the catalytic mechanism.

It belongs to the pseudouridine-5'-phosphate glycosidase family. As to quaternary structure, homotrimer. Mn(2+) is required as a cofactor.

It carries out the reaction D-ribose 5-phosphate + uracil = psi-UMP + H2O. Functionally, catalyzes the reversible cleavage of pseudouridine 5'-phosphate (PsiMP) to ribose 5-phosphate and uracil. Functions biologically in the cleavage direction, as part of a pseudouridine degradation pathway. The polypeptide is Pseudouridine-5'-phosphate glycosidase (Roseobacter denitrificans (strain ATCC 33942 / OCh 114) (Erythrobacter sp. (strain OCh 114))).